The sequence spans 548 residues: Glucose-6-phosphate isomerase (548 aa).

Glu355 functions as the Proton donor in the catalytic mechanism. Residues His386 and Lys514 contribute to the active site.

The protein belongs to the GPI family.

It localises to the cytoplasm. It catalyses the reaction alpha-D-glucose 6-phosphate = beta-D-fructose 6-phosphate. It participates in carbohydrate biosynthesis; gluconeogenesis. Its pathway is carbohydrate degradation; glycolysis; D-glyceraldehyde 3-phosphate and glycerone phosphate from D-glucose: step 2/4. In terms of biological role, catalyzes the reversible isomerization of glucose-6-phosphate to fructose-6-phosphate. This chain is Glucose-6-phosphate isomerase, found in Yersinia enterocolitica serotype O:8 / biotype 1B (strain NCTC 13174 / 8081).